Consider the following 216-residue polypeptide: Thiamine-phosphate synthase (216 aa).

Residues 41 to 45 and Asp77 contribute to the 4-amino-2-methyl-5-(diphosphooxymethyl)pyrimidine site; that span reads QLREK. Mg(2+)-binding residues include Asp78 and Asp97. Position 116 (Ser116) interacts with 4-amino-2-methyl-5-(diphosphooxymethyl)pyrimidine. 143–145 serves as a coordination point for 2-[(2R,5Z)-2-carboxy-4-methylthiazol-5(2H)-ylidene]ethyl phosphate; that stretch reads TTS. Lys146 contributes to the 4-amino-2-methyl-5-(diphosphooxymethyl)pyrimidine binding site. Residues Gly174 and 194-195 contribute to the 2-[(2R,5Z)-2-carboxy-4-methylthiazol-5(2H)-ylidene]ethyl phosphate site; that span reads IS.

Belongs to the thiamine-phosphate synthase family. The cofactor is Mg(2+).

It carries out the reaction 2-[(2R,5Z)-2-carboxy-4-methylthiazol-5(2H)-ylidene]ethyl phosphate + 4-amino-2-methyl-5-(diphosphooxymethyl)pyrimidine + 2 H(+) = thiamine phosphate + CO2 + diphosphate. The enzyme catalyses 2-(2-carboxy-4-methylthiazol-5-yl)ethyl phosphate + 4-amino-2-methyl-5-(diphosphooxymethyl)pyrimidine + 2 H(+) = thiamine phosphate + CO2 + diphosphate. It catalyses the reaction 4-methyl-5-(2-phosphooxyethyl)-thiazole + 4-amino-2-methyl-5-(diphosphooxymethyl)pyrimidine + H(+) = thiamine phosphate + diphosphate. It functions in the pathway cofactor biosynthesis; thiamine diphosphate biosynthesis; thiamine phosphate from 4-amino-2-methyl-5-diphosphomethylpyrimidine and 4-methyl-5-(2-phosphoethyl)-thiazole: step 1/1. Condenses 4-methyl-5-(beta-hydroxyethyl)thiazole monophosphate (THZ-P) and 2-methyl-4-amino-5-hydroxymethyl pyrimidine pyrophosphate (HMP-PP) to form thiamine monophosphate (TMP). In Pediococcus pentosaceus (strain ATCC 25745 / CCUG 21536 / LMG 10740 / 183-1w), this protein is Thiamine-phosphate synthase.